Reading from the N-terminus, the 266-residue chain is Integral membrane protein 2B (266 aa).

At 1 to 54 (MVKVTFNSALAQKEAKKDESKSGEEALIIPPDAVAVDCKDPDEVVPVGQRRAWC) the chain is on the cytoplasmic side. Residues 55-75 (WCMCFGLAFMLAGVILGGAYL) form a helical; Signal-anchor for type II membrane protein membrane-spanning segment. Residues 76 to 266 (YKYFAFQPDD…RFAVETLICP (191 aa)) lie on the Lumenal side of the membrane. The interval 102 to 134 (EPSADAPASRYQTIEENIKIFEEDEVEFISVPV) is necessary for interaction with APP and inhibitor effects on APP processing. Residues 137–231 (FADSDPANIV…LCHDKETYKL (95 aa)) form the BRICHOS domain. Intrachain disulfides connect Cys164/Cys223 and Cys248/Cys265. Asn170 carries an N-linked (GlcNAc...) asparagine glycan.

This sequence belongs to the ITM2 family. Homodimer; disulfide-linked. Interacts with SPPL2A and SPPL2B. Interacts with APP. Mature BRI2 (mBRI2) interacts with the APP amyloid-beta A4 protein; the interaction occurs at the cell surface and in the endocytic compartments and enable alpha- and beta-secretase-induced APP cleavage inhibition. Mature BRI2 (mBRI2) interacts with the APP C99; the interaction occurs in the endocytic compartments and enable gamma-secretase-induced C99 cleavage inhibition. May form heterodimers with Bri23 peptide and APP amyloid-beta protein 40. Interacts with ADAM7 in sperm; the interaction increases following capacitation. In terms of processing, the ectodomain C-terminal part of the imBRI2 is processed by furin producing a secreted Bri23 peptide and a mature BRI2, membrane form (mBRI2). The remaining part of the ectodomain of mBRI2 containing the BRICHOS domain is cleaved by ADAM10 and is secreted (BRI2C, soluble form). The membrane-bound N-terminal fragment (BRI2C, membrane form) is further proteolytically processed by SPPL2A and SPPL2B through regulated intramembrane proteolysis producing a secreted C-peptide and a BRI2 intracellular domain (BRI2 ICD) released in the cytosol. Shedding by ADAM10 facilitates intramembrane cleavage but is not absolutely required for BRI2 ICD generation. Post-translationally, glycosylation at Asn-170 is important for cell surface localization, but doesn't affect furin- and ADAM10-induced proteolytic processing.

Its subcellular location is the golgi apparatus membrane. The protein resides in the cell membrane. It is found in the endosome membrane. It localises to the secreted. In terms of biological role, plays a regulatory role in the processing of the amyloid-beta A4 precursor protein (APP) and acts as an inhibitor of the amyloid-beta peptide aggregation and fibrils deposition. Plays a role in the induction of neurite outgrowth. Functions as a protease inhibitor by blocking access of secretases to APP cleavage sites. Mature BRI2 (mBRI2) functions as a modulator of the amyloid-beta A4 precursor protein (APP) processing leading to a strong reduction in the secretion of secretase-processed amyloid-beta protein 40 and amyloid-beta protein 42. Functionally, bri23 peptide prevents aggregation of APP amyloid-beta protein 42 into toxic oligomers. The sequence is that of Integral membrane protein 2B (ITM2B) from Bos taurus (Bovine).